The primary structure comprises 1032 residues: UPF0182 protein sll1060 (1032 aa).

Transmembrane regions (helical) follow at residues 27-49 (WVKG…RIYV), 69-87 (WQGS…FIVF), 144-166 (VLLP…YVFI), 197-219 (FSGM…IGVL), 226-248 (PGLV…FRLL), 283-300 (WWRG…LIIL), 321-339 (HISA…EHWL), 364-386 (LPVE…WLSV), and 406-428 (IIGL…LGGW).

This sequence belongs to the UPF0182 family.

It is found in the cell membrane. In Synechocystis sp. (strain ATCC 27184 / PCC 6803 / Kazusa), this protein is UPF0182 protein sll1060.